A 299-amino-acid chain; its full sequence is Acetaldehyde dehydrogenase 2 (299 aa).

C130 functions as the Acyl-thioester intermediate in the catalytic mechanism. Residues 161-169 and N272 contribute to the NAD(+) site; that span reads SVGPGTRKN.

It belongs to the acetaldehyde dehydrogenase family.

The catalysed reaction is acetaldehyde + NAD(+) + CoA = acetyl-CoA + NADH + H(+). In Burkholderia lata (strain ATCC 17760 / DSM 23089 / LMG 22485 / NCIMB 9086 / R18194 / 383), this protein is Acetaldehyde dehydrogenase 2.